The primary structure comprises 218 residues: UPF0598 protein C8orf82 homolog (218 aa).

Belongs to the UPF0598 family.

This Mus musculus (Mouse) protein is UPF0598 protein C8orf82 homolog.